The chain runs to 424 residues: Enolase (424 aa).

Residue Gln162 coordinates (2R)-2-phosphoglycerate. Catalysis depends on Glu204, which acts as the Proton donor. The Mg(2+) site is built by Asp241, Glu284, and Asp311. The (2R)-2-phosphoglycerate site is built by Lys336, Arg365, Ser366, and Lys387. Lys336 serves as the catalytic Proton acceptor.

It belongs to the enolase family. Mg(2+) is required as a cofactor.

The protein resides in the cytoplasm. It is found in the secreted. Its subcellular location is the cell surface. The enzyme catalyses (2R)-2-phosphoglycerate = phosphoenolpyruvate + H2O. It functions in the pathway carbohydrate degradation; glycolysis; pyruvate from D-glyceraldehyde 3-phosphate: step 4/5. In terms of biological role, catalyzes the reversible conversion of 2-phosphoglycerate (2-PG) into phosphoenolpyruvate (PEP). It is essential for the degradation of carbohydrates via glycolysis. This chain is Enolase, found in Maricaulis maris (strain MCS10) (Caulobacter maris).